Reading from the N-terminus, the 212-residue chain is Histone H1.2 (212 aa).

Low complexity predominate over residues 1–17 (MSEAAPAAPAAAPPAEK). The interval 1–41 (MSEAAPAAPAAAPPAEKAPAKKKAAKKPAGVRRKASGPPVS) is disordered. At S2 the chain carries N-acetylserine. S2 carries the phosphoserine modification. An N6-acetyllysine modification is found at K17. Over residues 20–35 (AKKKAAKKPAGVRRKA) the composition is skewed to basic residues. 3 positions are modified to N6-(2-hydroxyisobutyryl)lysine: K23, K26, and K27. N6-(beta-hydroxybutyryl)lysine; alternate is present on K34. K34 is modified (N6-crotonyllysine; alternate). K34 bears the N6-methyllysine; alternate mark. The region spanning 36 to 109 (SGPPVSELIT…GASGSFKLNK (74 aa)) is the H15 domain. K46 carries the N6-(2-hydroxyisobutyryl)lysine modification. The residue at position 52 (K52) is an N6-(beta-hydroxybutyryl)lysine; alternate. K52 is subject to N6-(2-hydroxyisobutyryl)lysine; alternate. Position 54 is a citrulline (R54). An N6-(2-hydroxyisobutyryl)lysine modification is found at K63. N6-(beta-hydroxybutyryl)lysine; alternate is present on K64. K64 is subject to N6-crotonyllysine; alternate. At K64 the chain carries N6-(2-hydroxyisobutyryl)lysine; alternate. 2 positions are modified to N6-(2-hydroxyisobutyryl)lysine: K75 and K81. N6-(beta-hydroxybutyryl)lysine; alternate occurs at positions 85 and 90. N6-crotonyllysine; alternate is present on residues K85, K90, and K97. N6-(2-hydroxyisobutyryl)lysine; alternate occurs at positions 85, 90, and 97. Position 97 is an N6-succinyllysine; alternate (K97). The segment at 98–212 (GTGASGSFKL…KAKKVAAKKK (115 aa)) is disordered. S104 carries the phosphoserine; by PKC modification. The residue at position 106 (K106) is an N6-(beta-hydroxybutyryl)lysine. K110, K117, K121, K129, and K136 each carry N6-(2-hydroxyisobutyryl)lysine. Positions 121–148 (KKAGAAKAKKPAGAAKKPKKATGAATPK) are enriched in low complexity. T146 bears the Phosphothreonine mark. An N6-(2-hydroxyisobutyryl)lysine modification is found at K148. Over residues 149-160 (KAAKKTPKKAKK) the composition is skewed to basic residues. 2 positions are modified to N6-crotonyllysine; alternate: K159 and K168. N6-(2-hydroxyisobutyryl)lysine; alternate occurs at positions 159 and 168. Positions 169 to 212 (KVAKSPKKAKVTKPKKVKSASKAVKPKAAKPKVAKAKKVAAKKK) are enriched in basic residues. Residue K186 is modified to N6-methyllysine; by EHMT1 and EHMT2. At S187 the chain carries ADP-ribosylserine. K212 is modified (N6-(2-hydroxyisobutyryl)lysine).

It belongs to the histone H1/H5 family. Interacts with TSC22D1 isoform 2. In terms of processing, H1 histones are progressively phosphorylated during the cell cycle, becoming maximally phosphorylated during late G2 phase and M phase, and being dephosphorylated sharply thereafter. Post-translationally, crotonylation (Kcr) is specifically present in male germ cells and marks testis-specific genes in post-meiotic cells, including X-linked genes that escape sex chromosome inactivation in haploid cells. Crotonylation marks active promoters and enhancers and confers resistance to transcriptional repressors. It is also associated with post-meiotically activated genes on autosomes. ADP-ribosylated on Ser-187 in response to DNA damage. In terms of processing, citrullination at Arg-54 (H1R54ci) by PADI4 takes place within the DNA-binding site of H1 and results in its displacement from chromatin and global chromatin decondensation, thereby promoting pluripotency and stem cell maintenance. Post-translationally, hydroxybutyrylation of histones is induced by starvation.

The protein localises to the nucleus. It is found in the chromosome. In terms of biological role, histone H1 protein binds to linker DNA between nucleosomes forming the macromolecular structure known as the chromatin fiber. Histones H1 are necessary for the condensation of nucleosome chains into higher-order structured fibers. Also acts as a regulator of individual gene transcription through chromatin remodeling, nucleosome spacing and DNA methylation. The protein is Histone H1.2 of Mus musculus (Mouse).